Here is a 164-residue protein sequence, read N- to C-terminus: NADH-quinone oxidoreductase subunit C (164 aa).

The protein belongs to the complex I 30 kDa subunit family. In terms of assembly, NDH-1 is composed of 14 different subunits. Subunits NuoB, C, D, E, F, and G constitute the peripheral sector of the complex.

The protein resides in the cell inner membrane. The catalysed reaction is a quinone + NADH + 5 H(+)(in) = a quinol + NAD(+) + 4 H(+)(out). NDH-1 shuttles electrons from NADH, via FMN and iron-sulfur (Fe-S) centers, to quinones in the respiratory chain. The immediate electron acceptor for the enzyme in this species is believed to be ubiquinone. Couples the redox reaction to proton translocation (for every two electrons transferred, four hydrogen ions are translocated across the cytoplasmic membrane), and thus conserves the redox energy in a proton gradient. In Geotalea uraniireducens (strain Rf4) (Geobacter uraniireducens), this protein is NADH-quinone oxidoreductase subunit C.